Here is a 356-residue protein sequence, read N- to C-terminus: UDP-N-acetylglucosamine--N-acetylmuramyl-(pentapeptide) pyrophosphoryl-undecaprenol N-acetylglucosamine transferase (356 aa).

UDP-N-acetyl-alpha-D-glucosamine-binding positions include 15 to 17 (TGG), N127, R163, S191, I244, 263 to 268 (ALTVSE), and Q288.

This sequence belongs to the glycosyltransferase 28 family. MurG subfamily.

It localises to the cell inner membrane. The enzyme catalyses di-trans,octa-cis-undecaprenyl diphospho-N-acetyl-alpha-D-muramoyl-L-alanyl-D-glutamyl-meso-2,6-diaminopimeloyl-D-alanyl-D-alanine + UDP-N-acetyl-alpha-D-glucosamine = di-trans,octa-cis-undecaprenyl diphospho-[N-acetyl-alpha-D-glucosaminyl-(1-&gt;4)]-N-acetyl-alpha-D-muramoyl-L-alanyl-D-glutamyl-meso-2,6-diaminopimeloyl-D-alanyl-D-alanine + UDP + H(+). It participates in cell wall biogenesis; peptidoglycan biosynthesis. Functionally, cell wall formation. Catalyzes the transfer of a GlcNAc subunit on undecaprenyl-pyrophosphoryl-MurNAc-pentapeptide (lipid intermediate I) to form undecaprenyl-pyrophosphoryl-MurNAc-(pentapeptide)GlcNAc (lipid intermediate II). This is UDP-N-acetylglucosamine--N-acetylmuramyl-(pentapeptide) pyrophosphoryl-undecaprenol N-acetylglucosamine transferase from Yersinia pestis bv. Antiqua (strain Antiqua).